The primary structure comprises 206 residues: Thymidylate kinase (206 aa).

An ATP-binding site is contributed by Gly-11–Thr-18.

The protein belongs to the thymidylate kinase family.

It carries out the reaction dTMP + ATP = dTDP + ADP. Functionally, phosphorylation of dTMP to form dTDP in both de novo and salvage pathways of dTTP synthesis. This Burkholderia pseudomallei (strain 1106a) protein is Thymidylate kinase.